Reading from the N-terminus, the 591-residue chain is Protein phosphatase EYA1 (591 aa).

Disordered stretches follow at residues 1-95 (MEMQ…SYPH), 150-169 (GLSQ…GTSF), and 239-319 (MTSS…PDSD). Residues 8–23 (SPHSRLSGSSESPSGP) show a composition bias toward low complexity. Over residues 28–53 (SHINSTSMTPNGTEVKTEPMSSSEIA) the composition is skewed to polar residues. A compositionally biased stretch (low complexity) spans 56 to 75 (AADGSLDSFSGSALGSSSFS). Over residues 78–87 (PAHPFSPPQI) the composition is skewed to pro residues. Positions 240 to 252 (TSSNTSPTTPSTN) are enriched in low complexity. The span at 253 to 286 (ATYQLQEPPSGVTSQAVTDPTAEYSTIHSPSTPI) shows a compositional bias: polar residues. The span at 287-302 (KETDSERLRRGSDGKS) shows a compositional bias: basic and acidic residues. Aspartate 327 acts as the Nucleophile in catalysis. Mg(2+)-binding residues include aspartate 327, aspartate 329, and aspartate 555. Aspartate 329 serves as the catalytic Proton donor.

It belongs to the HAD-like hydrolase superfamily. EYA family. In terms of assembly, probably interacts with SIX2, SIX4 and SIX5. Interacts with H2AX in response to DNA damage. Interacts with SIX3; promotes EYA1 translocation to the nucleus. The cofactor is Mg(2+). In terms of processing, sumoylated with SUMO1. Extensively expressed in cranial placodes, branchial arches, CNS and developing eye and nose.

The protein resides in the cytoplasm. The protein localises to the nucleus. The catalysed reaction is O-phospho-L-tyrosyl-[protein] + H2O = L-tyrosyl-[protein] + phosphate. It carries out the reaction O-phospho-L-seryl-[protein] + H2O = L-seryl-[protein] + phosphate. It catalyses the reaction O-phospho-L-threonyl-[protein] + H2O = L-threonyl-[protein] + phosphate. In terms of biological role, functions both as protein phosphatase and as transcriptional coactivator for SIX1, and probably also for SIX2, SIX4 and SIX5. Tyrosine phosphatase that dephosphorylates 'Tyr-142' of histone H2AX (H2AXY142ph) and promotes efficient DNA repair via the recruitment of DNA repair complexes containing MDC1. 'Tyr-142' phosphorylation of histone H2AX plays a central role in DNA repair and acts as a mark that distinguishes between apoptotic and repair responses to genotoxic stress. Its function as histone phosphatase may contribute to its function in transcription regulation during organogenesis. Also has phosphatase activity with proteins phosphorylated on Ser and Thr residues (in vitro). Required for normal embryonic development of the craniofacial and trunk skeleton, kidneys and ears. Together with SIX1, it plays an important role in hypaxial muscle development; in this it is functionally redundant with EYA2. The chain is Protein phosphatase EYA1 (Eya1) from Mus musculus (Mouse).